Reading from the N-terminus, the 362-residue chain is sn-glycerol-3-phosphate import ATP-binding protein UgpC (362 aa).

The ABC transporter domain occupies Leu4–Ile235. Gly37–Ser44 is an ATP binding site.

This sequence belongs to the ABC transporter superfamily. sn-glycerol-3-phosphate importer (TC 3.A.1.1.3) family. In terms of assembly, the complex is composed of two ATP-binding proteins (UgpC), two transmembrane proteins (UgpA and UgpE) and a solute-binding protein (UgpB).

Its subcellular location is the cell inner membrane. It catalyses the reaction sn-glycerol 3-phosphate(out) + ATP + H2O = sn-glycerol 3-phosphate(in) + ADP + phosphate + H(+). Its function is as follows. Part of the ABC transporter complex UgpBAEC involved in sn-glycerol-3-phosphate (G3P) import. Responsible for energy coupling to the transport system. The chain is sn-glycerol-3-phosphate import ATP-binding protein UgpC from Bordetella bronchiseptica (strain ATCC BAA-588 / NCTC 13252 / RB50) (Alcaligenes bronchisepticus).